Consider the following 296-residue polypeptide: Stanniocalcin-2 (296 aa).

An N-terminal signal peptide occupies residues Met1–Gly24. The disordered stretch occupies residues Ala22 to Arg44. A glycan (N-linked (GlcNAc...) asparagine) is linked at Asn73. Residues Arg236–Arg296 form a disordered region. Residues Tyr238–Ser258 are compositionally biased toward basic and acidic residues.

Belongs to the stanniocalcin family. In terms of assembly, homodimer; disulfide-linked. In terms of tissue distribution, expressed in a variety of tissues. Strongly expressed in ovary and to a lesser extent in kidney.

The protein resides in the secreted. Its function is as follows. Has an anti-hypocalcemic action on calcium and phosphate homeostasis. The protein is Stanniocalcin-2 (Stc2) of Rattus norvegicus (Rat).